Reading from the N-terminus, the 223-residue chain is Probable GTP-binding protein EngB (223 aa).

Residues 49-223 enclose the EngB-type G domain; sequence MGVEIAFAGR…LRAALAGLTD (175 aa). Residues 57-64, 84-88, 102-105, 169-172, and 203-205 contribute to the GTP site; these read GRSNVGKS, GRTKQ, DMPG, TKAD, and TSS. The Mg(2+) site is built by Ser64 and Thr86.

Belongs to the TRAFAC class TrmE-Era-EngA-EngB-Septin-like GTPase superfamily. EngB GTPase family. Mg(2+) serves as cofactor.

Functionally, necessary for normal cell division and for the maintenance of normal septation. This Granulibacter bethesdensis (strain ATCC BAA-1260 / CGDNIH1) protein is Probable GTP-binding protein EngB.